The sequence spans 96 residues: Co-chaperonin GroES (96 aa).

This sequence belongs to the GroES chaperonin family. Heptamer of 7 subunits arranged in a ring. Interacts with the chaperonin GroEL.

Its subcellular location is the cytoplasm. Functionally, together with the chaperonin GroEL, plays an essential role in assisting protein folding. The GroEL-GroES system forms a nano-cage that allows encapsulation of the non-native substrate proteins and provides a physical environment optimized to promote and accelerate protein folding. GroES binds to the apical surface of the GroEL ring, thereby capping the opening of the GroEL channel. The protein is Co-chaperonin GroES of Leptothrix cholodnii (strain ATCC 51168 / LMG 8142 / SP-6) (Leptothrix discophora (strain SP-6)).